We begin with the raw amino-acid sequence, 60 residues long: Cytochrome c oxidase subunit 9, mitochondrial (60 aa).

Over 1–15 (MSAIAPITGTIRKRI) the chain is Mitochondrial matrix. Residues 16–38 (LADITIGFAIGGAMASYWWWGFH) traverse the membrane as a helical segment. The Mitochondrial intermembrane segment spans residues 39 to 57 (KNIINKREAYYAKLAEQKA). Positions 58-60 (AEN) are cleaved as a propeptide — removed in mature form.

It belongs to the fungal cytochrome c oxidase subunit 7a family. As to quaternary structure, component of the cytochrome c oxidase (complex IV, CIV), a multisubunit enzyme composed of a catalytic core of 3 subunits and several supernumerary subunits. The complex exists as a monomer or a dimer and forms supercomplexes (SCs) in the inner mitochondrial membrane with ubiquinol-cytochrome c oxidoreductase (cytochrome b-c1 complex, complex III, CIII).

The protein resides in the mitochondrion inner membrane. The protein operates within energy metabolism; oxidative phosphorylation. Its function is as follows. Component of the cytochrome c oxidase, the last enzyme in the mitochondrial electron transport chain which drives oxidative phosphorylation. The respiratory chain contains 3 multisubunit complexes succinate dehydrogenase (complex II, CII), ubiquinol-cytochrome c oxidoreductase (cytochrome b-c1 complex, complex III, CIII) and cytochrome c oxidase (complex IV, CIV), that cooperate to transfer electrons derived from NADH and succinate to molecular oxygen, creating an electrochemical gradient over the inner membrane that drives transmembrane transport and the ATP synthase. Cytochrome c oxidase is the component of the respiratory chain that catalyzes the reduction of oxygen to water. Electrons originating from reduced cytochrome c in the intermembrane space (IMS) are transferred via the dinuclear copper A center (CU(A)) of subunit 2 and heme A of subunit 1 to the active site in subunit 1, a binuclear center (BNC) formed by heme A3 and copper B (CU(B)). The BNC reduces molecular oxygen to 2 water molecules using 4 electrons from cytochrome c in the IMS and 4 protons from the mitochondrial matrix. This is Cytochrome c oxidase subunit 9, mitochondrial (COX9) from Kluyveromyces lactis (strain ATCC 8585 / CBS 2359 / DSM 70799 / NBRC 1267 / NRRL Y-1140 / WM37) (Yeast).